A 66-amino-acid polypeptide reads, in one-letter code: Large ribosomal subunit protein bL31 (66 aa).

4 residues coordinate Zn(2+): C16, C18, C36, and C39.

Belongs to the bacterial ribosomal protein bL31 family. Type A subfamily. In terms of assembly, part of the 50S ribosomal subunit. It depends on Zn(2+) as a cofactor.

Binds the 23S rRNA. The protein is Large ribosomal subunit protein bL31 of Geobacter metallireducens (strain ATCC 53774 / DSM 7210 / GS-15).